Reading from the N-terminus, the 66-residue chain is Large ribosomal subunit protein bL33c (66 aa).

It belongs to the bacterial ribosomal protein bL33 family.

The protein localises to the plastid. The protein resides in the chloroplast. In Crucihimalaya wallichii (Rock-cress), this protein is Large ribosomal subunit protein bL33c.